The following is a 455-amino-acid chain: Tumor necrosis factor receptor superfamily member 1A (455 aa).

The N-terminal stretch at 1 to 29 (MGLSTVPDLLLPLVLLELLVGIYPSGVIG) is a signal peptide. At 30-211 (LVPHLGDREK…VKGTEDSGTT (182 aa)) the chain is on the extracellular side. TNFR-Cys repeat units lie at residues 43–82 (VCPQ…TDCR), 83–125 (ECES…DTVC), 126–166 (GCRK…NTVC), and 167–196 (TCHA…KLCL). Cystine bridges form between cysteine 44–cysteine 58, cysteine 59–cysteine 72, cysteine 62–cysteine 81, cysteine 84–cysteine 99, cysteine 102–cysteine 117, cysteine 105–cysteine 125, and cysteine 127–cysteine 143. A glycan (N-linked (GlcNAc...) asparagine) is linked at asparagine 54. N-linked (GlcNAc...) asparagine glycosylation is found at asparagine 145 and asparagine 151. 5 disulfide bridges follow: cysteine 146–cysteine 158, cysteine 149–cysteine 166, cysteine 168–cysteine 179, cysteine 182–cysteine 195, and cysteine 185–cysteine 191. The chain crosses the membrane as a helical span at residues 212 to 232 (VLLPLVIFFGLCLLSLLFIGL). Topologically, residues 233-455 (MYRYQRWKSK…ALPPAPSLLR (223 aa)) are cytoplasmic. A disordered region spans residues 254 to 273 (EKEGELEGTTTKPLAPNPSF). Positions 338-348 (LQKWEDSAHKP) are N-SMase activation domain (NSD). Residues 356–441 (PATLYAVVEN…GCLEDIEEAL (86 aa)) enclose the Death domain. (Microbial infection) N-beta-linked (GlcNAc) arginine glycosylation occurs at arginine 376.

Binding of TNF to the extracellular domain leads to homotrimerization. The aggregated death domains provide a novel molecular interface that interacts specifically with the death domain of TRADD. Various TRADD-interacting proteins such as TRAFS, RIPK1 and possibly FADD, are recruited to the complex by their association with TRADD. This complex activates at least two distinct signaling cascades, apoptosis and NF-kappa-B signaling. Interacts with BAG4, BABAM2, FEM1B, GRB2, SQSTM1 and TRPC4AP. Interacts directly with NOL3 (via CARD domain); inhibits TNF-signaling pathway. Interacts with SH3RF2, TRADD and RIPK1. SH3RF2 facilitates the recruitment of RIPK1 and TRADD to TNFRSF1A in a TNF-alpha-dependent process. Interacts with PGLYRP1; this interaction is important for cell death induction. Interacts (via death domain) with MADD (via death domain). In terms of assembly, (Microbial infection) Interacts with mumps virus protein SH; this interaction inhibits downstream NF-kappa-B pathway activation. As to quaternary structure, (Microbial infection) Interacts with HCV core protein. (Microbial infection) Interacts with human cytomegalovirus/HHV-5 protein UL138. In terms of assembly, (Microbial infection) Interacts with host TNFRSF1A; this interaction leads to the stimulation of both surface expression and shedding of TNFRSF1A. The soluble form is produced from the membrane form by proteolytic processing. In terms of processing, (Microbial infection) Glycosylated at Arg-376 by enteropathogenic E.coli protein NleB1 and S.typhimurium protein Ssek3: arginine GlcNAcylation prevents homotypic/heterotypic death domain interactions.

It is found in the cell membrane. The protein resides in the golgi apparatus membrane. It localises to the secreted. Its function is as follows. Receptor for TNFSF2/TNF-alpha and homotrimeric TNFSF1/lymphotoxin-alpha. The adapter molecule FADD recruits caspase-8 to the activated receptor. The resulting death-inducing signaling complex (DISC) performs caspase-8 proteolytic activation which initiates the subsequent cascade of caspases (aspartate-specific cysteine proteases) mediating apoptosis. Contributes to the induction of non-cytocidal TNF effects including anti-viral state and activation of the acid sphingomyelinase. This chain is Tumor necrosis factor receptor superfamily member 1A (TNFRSF1A), found in Homo sapiens (Human).